Reading from the N-terminus, the 144-residue chain is Cytochrome c oxidase subunit 4 isoform 1, mitochondrial (144 aa).

Residues serine 1–asparagine 73 lie on the Mitochondrial matrix side of the membrane. Lysine 4 carries the N6-acetyllysine; alternate modification. Lysine 4 carries the N6-succinyllysine; alternate modification. At lysine 28 the chain carries N6-acetyllysine. A phosphoserine mark is found at serine 31 and serine 33. Lysine 35 carries the post-translational modification N6-acetyllysine; alternate. Position 35 is an N6-succinyllysine; alternate (lysine 35). Lysine 42 carries the N6-acetyllysine modification. The chain crosses the membrane as a helical span at residues glutamate 74 to tyrosine 99. Topologically, residues valine 100–lysine 144 are mitochondrial intermembrane.

It belongs to the cytochrome c oxidase IV family. As to quaternary structure, component of the cytochrome c oxidase (complex IV, CIV), a multisubunit enzyme composed of 14 subunits. The complex is composed of a catalytic core of 3 subunits MT-CO1, MT-CO2 and MT-CO3, encoded in the mitochondrial DNA, and 11 supernumerary subunits COX4I, COX5A, COX5B, COX6A, COX6B, COX6C, COX7A, COX7B, COX7C, COX8 and NDUFA4, which are encoded in the nuclear genome. The complex exists as a monomer or a dimer and forms supercomplexes (SCs) in the inner mitochondrial membrane with NADH-ubiquinone oxidoreductase (complex I, CI) and ubiquinol-cytochrome c oxidoreductase (cytochrome b-c1 complex, complex III, CIII), resulting in different assemblies (supercomplex SCI(1)III(2)IV(1) and megacomplex MCI(2)III(2)IV(2)). Interacts with PHB2; the interaction decreases in absence of SPHK2. Interacts with AFG1L. Interacts with ABCB7; this interaction allows the regulation of cellular iron homeostasis and cellular reactive oxygen species (ROS) levels in cardiomyocytes. Interacts with FLVCR2; this interaction occurs in the absence of heme and is disrupted upon heme binding. Interacts with IRGC.

The protein resides in the mitochondrion inner membrane. The protein operates within energy metabolism; oxidative phosphorylation. Its function is as follows. Component of the cytochrome c oxidase, the last enzyme in the mitochondrial electron transport chain which drives oxidative phosphorylation. The respiratory chain contains 3 multisubunit complexes succinate dehydrogenase (complex II, CII), ubiquinol-cytochrome c oxidoreductase (cytochrome b-c1 complex, complex III, CIII) and cytochrome c oxidase (complex IV, CIV), that cooperate to transfer electrons derived from NADH and succinate to molecular oxygen, creating an electrochemical gradient over the inner membrane that drives transmembrane transport and the ATP synthase. Cytochrome c oxidase is the component of the respiratory chain that catalyzes the reduction of oxygen to water. Electrons originating from reduced cytochrome c in the intermembrane space (IMS) are transferred via the dinuclear copper A center (CU(A)) of subunit 2 and heme A of subunit 1 to the active site in subunit 1, a binuclear center (BNC) formed by heme A3 and copper B (CU(B)). The BNC reduces molecular oxygen to 2 water molecules using 4 electrons from cytochrome c in the IMS and 4 protons from the mitochondrial matrix. This chain is Cytochrome c oxidase subunit 4 isoform 1, mitochondrial (COX4I1), found in Gorilla gorilla gorilla (Western lowland gorilla).